Consider the following 159-residue polypeptide: Cytochrome c-type biogenesis protein CcmE (159 aa).

Residues 1–23 (MNNSSLENSASLKVILKQRKKKR) lie on the Cytoplasmic side of the membrane. A helical; Signal-anchor for type II membrane protein transmembrane segment spans residues 24 to 44 (LLIILLCCLVMAIAASLVVYA). Residues 45-159 (MRHAVSFFRM…RLKKHYSVEK (115 aa)) lie on the Periplasmic side of the membrane. Residues H138 and Y142 each coordinate heme.

This sequence belongs to the CcmE/CycJ family.

It localises to the cell inner membrane. Its function is as follows. Heme chaperone required for the biogenesis of c-type cytochromes. Transiently binds heme delivered by CcmC and transfers the heme to apo-cytochromes in a process facilitated by CcmF and CcmH. This Bartonella tribocorum (strain CIP 105476 / IBS 506) protein is Cytochrome c-type biogenesis protein CcmE.